Consider the following 358-residue polypeptide: Methylthioribose-1-phosphate isomerase (358 aa).

Residues 54–56 (CGA) and Gln-205 each bind substrate. The Proton donor role is filled by Asp-246. 256–257 (NQ) contributes to the substrate binding site.

Belongs to the eIF-2B alpha/beta/delta subunits family. MtnA subfamily.

The enzyme catalyses 5-(methylsulfanyl)-alpha-D-ribose 1-phosphate = 5-(methylsulfanyl)-D-ribulose 1-phosphate. It participates in amino-acid biosynthesis; L-methionine biosynthesis via salvage pathway; L-methionine from S-methyl-5-thio-alpha-D-ribose 1-phosphate: step 1/6. Functionally, catalyzes the interconversion of methylthioribose-1-phosphate (MTR-1-P) into methylthioribulose-1-phosphate (MTRu-1-P). This chain is Methylthioribose-1-phosphate isomerase, found in Pseudomonas fluorescens (strain ATCC BAA-477 / NRRL B-23932 / Pf-5).